Here is a 423-residue protein sequence, read N- to C-terminus: Hypoxia responsive morphology factor B (423 aa).

The Bipartite nuclear localization signal motif lies at 46–69; the sequence is KRSKTRRPKKEYKLQYENTKAHRV. Residues 157–187 are RNA recognition motif (RRM)-like domain; that stretch reads TQNCWAYRAAYLNAVHTIFSEQICSAMEVSP. Positions 243 to 257 are enriched in polar residues; sequence LSPQSGRGPEPSTQI. The disordered stretch occupies residues 243 to 273; the sequence is LSPQSGRGPEPSTQIAEPGRHDSQSEQSTIS.

Belongs to the hrmA family.

It localises to the nucleus. Functionally, probably modulates the generation of the hypoxia-typic morphotype (called H-MORPH) with altered biofilm architecture that leads to increased host inflammation, rapid disease progression, and mortality in a murine model of invasive aspergillosis. In Aspergillus fumigatus (strain CBS 144.89 / FGSC A1163 / CEA10) (Neosartorya fumigata), this protein is Hypoxia responsive morphology factor B.